The sequence spans 552 residues: Keratin, type II cytoskeletal 6A (552 aa).

Over residues 1-14 the composition is skewed to polar residues; the sequence is MSTKTVIRSQTSHR. The disordered stretch occupies residues 1–21; that stretch reads MSTKTVIRSQTSHRGFSAGSA. The segment at 1–151 is head; that stretch reads MSTKTVIRSQ…DPTIQRVRTE (151 aa). Positions 152 to 187 are coil 1A; sequence EREQIKTLNNKFASFIDKVRFLEQQNKVLDTKWALL. In terms of domain architecture, IF rod spans 152-465; it reads EREQIKTLNN…TLLEGEECRL (314 aa). The segment at 188 to 206 is linker 1; it reads QEQGTKTVRQGLETLFEQY. A coil 1B region spans residues 207-298; the sequence is INDLRKELDN…ALYEAELSQM (92 aa). The tract at residues 299 to 322 is linker 12; sequence QTHISDTSVVLSMDNNRSLDLDSI. The interval 323 to 461 is coil 2; it reads IAEVKAQYEE…ATYRTLLEGE (139 aa). The interval 462–552 is tail; that stretch reads ECRLNGEGVG…TSSTRKSYRP (91 aa). A disordered region spans residues 524–552; that stretch reads ISSGLSSSGGSSSTIKYTTTSSTRKSYRP. The segment covering 525–552 has biased composition (low complexity); sequence SSGLSSSGGSSSTIKYTTTSSTRKSYRP.

The protein belongs to the intermediate filament family. In terms of assembly, heterodimer of a type I and a type II keratin. KRT6 isomers associate with KRT16 and/or KRT17. Interacts with TCHP.

In terms of biological role, epidermis-specific type I keratin involved in wound healing. Involved in the activation of follicular keratinocytes after wounding, while it does not play a major role in keratinocyte proliferation or migration. Participates in the regulation of epithelial migration by inhibiting the activity of SRC during wound repair. This Rattus norvegicus (Rat) protein is Keratin, type II cytoskeletal 6A (Krt6a).